The sequence spans 295 residues: Fatty acid desaturase 4-like 1, chloroplastic (295 aa).

Residues 1-29 (MAVSFQTKNPLRPITNIPRSYGPTRVRVT) constitute a chloroplast transit peptide. A run of 3 helical transmembrane segments spans residues 72–92 (WVAA…IGGF), 102–122 (LACY…HWAI), and 175–195 (LAIN…CILL).

Belongs to the fatty acid desaturase CarF family.

It is found in the plastid. The protein localises to the chloroplast membrane. Its pathway is lipid metabolism; fatty acid metabolism. In terms of biological role, fatty acid desaturase involved in the production of chloroplast-specific phosphatidylglycerol molecular species. Catalyzes the formation of a trans double bond introduced close to the carboxyl group of palmitic acid, which is specifically esterified to the sn-2 glyceryl carbon of phosphatidylglycerol. This Arabidopsis thaliana (Mouse-ear cress) protein is Fatty acid desaturase 4-like 1, chloroplastic (FAD4L1).